A 262-amino-acid polypeptide reads, in one-letter code: uncharacterized protein (262 aa).

In terms of domain architecture, S4 RNA-binding spans 6 to 70 (LRINQFLAHY…LKNKKFSVLV (65 aa)). Aspartate 108 functions as the Nucleophile in the catalytic mechanism.

It belongs to the pseudouridine synthase RsuA family.

The catalysed reaction is a uridine in RNA = a pseudouridine in RNA. This is an uncharacterized protein from Helicobacter pylori (strain J99 / ATCC 700824) (Campylobacter pylori J99).